Consider the following 380-residue polypeptide: Cytochrome b (380 aa).

A run of 4 helical transmembrane segments spans residues 33-53, 77-98, 113-133, and 178-198; these read FGSL…FLAM, WLIR…YLHI, WNVG…GYVL, and FFAF…IHLL. His-83 and His-97 together coordinate heme b. Heme b-binding residues include His-182 and His-196. An a ubiquinone-binding site is contributed by His-201. Helical transmembrane passes span 226–246, 288–308, 320–340, and 347–367; these read YKDL…ALFS, LGGV…PILH, ITQF…WIGG, and FIII…VLTP.

This sequence belongs to the cytochrome b family. In terms of assembly, the cytochrome bc1 complex contains 3 respiratory subunits (MT-CYB, CYC1 and UQCRFS1), 2 core proteins (UQCRC1 and UQCRC2) and probably 6 low-molecular weight proteins. Heme b serves as cofactor.

It is found in the mitochondrion inner membrane. Component of the ubiquinol-cytochrome c reductase complex (complex III or cytochrome b-c1 complex) that is part of the mitochondrial respiratory chain. The b-c1 complex mediates electron transfer from ubiquinol to cytochrome c. Contributes to the generation of a proton gradient across the mitochondrial membrane that is then used for ATP synthesis. In Dactyloptena peterseni (Starry flying gurnard), this protein is Cytochrome b (mt-cyb).